We begin with the raw amino-acid sequence, 132 residues long: uncharacterized protein (132 aa).

This is an uncharacterized protein from Sinorhizobium fredii (strain NBRC 101917 / NGR234).